A 630-amino-acid polypeptide reads, in one-letter code: Plastin-1 (630 aa).

A fimbrin headpiece region spans residues 1–114; it reads MENNVTTISR…LGGTSSISTE (114 aa). EF-hand domains are found at residues 11-46 and 51-86; these read EELE…ASLP and KVRE…LKSK. Ca(2+)-binding residues include Asp-24, Asp-26, Ser-28, Tyr-30, Glu-35, Asp-64, Asn-66, Asp-68, Lys-70, and Glu-75. Actin-binding stretches follow at residues 108–375 and 376–624; these read TSSI…LFNT and YPAL…LMGR. The fimbrin core stretch occupies residues 115–630; the sequence is GTQHSYSEEE…LMGRGLNKIK (516 aa). Calponin-homology (CH) domains lie at 122–238, 266–377, 396–505, and 517–626; these read EEEK…KVGL, LSPE…NTYP, SNEE…RRYT, and KVND…GRGL.

In terms of assembly, monomer. The N-terminus is blocked.

The protein localises to the cytoplasm. It localises to the cell projection. Its subcellular location is the stereocilium. In terms of biological role, actin-bundling protein. In the inner ear, it is required for stereocilia formation. Mediates liquid packing of actin filaments that is necessary for stereocilia to grow to their proper dimensions. This Gallus gallus (Chicken) protein is Plastin-1 (PLS1).